A 178-amino-acid chain; its full sequence is Gamma-crystallin S (178 aa).

At Ser-2 the chain carries N-acetylserine. The tract at residues 2 to 5 (SKTG) is N-terminal arm. 2 Beta/gamma crystallin 'Greek key' domains span residues 6–44 (TKITFYEDKNFQGRRYDCDCDCADFHTYLSRCNSIKVEG) and 45–87 (GTWA…RAVH). Residues 88-93 (LPSGGQ) form a connecting peptide region. 2 Beta/gamma crystallin 'Greek key' domains span residues 94–134 (YKIQ…KVLE) and 135–177 (GVWI…RRIV).

Belongs to the beta/gamma-crystallin family. As to quaternary structure, monomer.

In terms of biological role, crystallins are the dominant structural components of the vertebrate eye lens. The sequence is that of Gamma-crystallin S (CRYGS) from Homo sapiens (Human).